A 2474-amino-acid polypeptide reads, in one-letter code: Polyprotein P1234 (2474 aa).

Positions 28–259 constitute an Alphavirus-like MT domain; that stretch reads EPRQVTPNDH…ESRKLLKSWH (232 aa). The For mRNA-capping enzyme nsP1 activity role is filled by histidine 37. Zn(2+) contacts are provided by histidine 79, glutamate 129, cysteine 134, and cysteine 141. Positions 295–450 are membrane-binding and oligomerization; sequence GLYGKTTGYA…QKVPAEFDSF (156 aa). S-palmitoyl cysteine; by host attachment occurs at residues cysteine 417 and cysteine 419. A (+)RNA virus helicase ATP-binding domain is found at 690 to 842; the sequence is DLTNPPYHEF…HNICTQVYHK (153 aa). 721-728 lines the a ribonucleoside 5'-triphosphate pocket; sequence GVPGSGKS. In terms of domain architecture, (+)RNA virus helicase C-terminal spans 843–991; it reads SISRRCTLPV…IKEWEVEHAS (149 aa). One can recognise a Peptidase C9 domain in the interval 1004–1327; sequence DTFQNKANVC…NQLNAAFVGQ (324 aa). The interval 1005–1024 is nucleolus localization signal; it reads TFQNKANVCWAKSLVPILET. Cysteine 1013 functions as the For cysteine protease nsP2 activity in the catalytic mechanism. A Nuclear export signal motif is present at residues 1058–1067; it reads TRMYGVDLDS. The active-site For cysteine protease nsP2 activity is the histidine 1083. The Nuclear localization signal motif lies at 1182-1186; that stretch reads PTKRV. Positions 1334–1493 constitute a Macro domain; that stretch reads APSYRVKRMD…KIAEAIQMRT (160 aa). ADP-D-ribose-binding residues include aspartate 1343, asparagine 1357, glycine 1365, glycine 1445, valine 1446, and tyrosine 1447. Zn(2+) is bound by residues cysteine 1595, cysteine 1597, cysteine 1620, and cysteine 1638. The disordered stretch occupies residues 1651–1706; it reads RVSPREYKSPQETAQEVSSTTSLTHSQFDLSVDGEELPAPSDLEADAPIPEPTPDD. The tract at residues 1659 to 1857 is HVD; the sequence is SPQETAQEVS…TCSDTDDELX (199 aa). The segment covering 1660–1679 has biased composition (polar residues); the sequence is PQETAQEVSSTTSLTHSQFD. Interaction with host CD2AP regions lie at residues 1726 to 1739 and 1756 to 1767; these read VMNT…RRRR and PMASVRFFRADL. The interval 1745–1793 is interaction with host FHL1; it reads VTCDEREGNVLPMASVRFFRADLHSIVQETAEIRDTAASLQAPLSVATE. Residues 1812–1815 carry the FGDF; binding to host G3BP1 motif; it reads FGDF. Positions 1820 to 1828 are interaction with host CD2AP; that stretch reads IESLSSELL. Positions 1830–1833 match the FGDF; binding to host G3BP1 motif; sequence FGDF. Residues 2228-2343 enclose the RdRp catalytic domain; that stretch reads DAVLETDIAS…HGVVSDELMA (116 aa).

As to quaternary structure, homododecamer. The enzyme forms a membrane-associated dodecameric ring with a central channel for the exchange of between the viral replication factories and the host cytoplasm. Interacts with non-structural protein 3. Interacts with RNA-directed RNA polymerase nsP4. Interacts with protease nsP2. Interacts with itself. Interacts with host STING1; this interaction results in inhibition of cGAS-STING signaling and increased levels of palmitoylation and protein stabilization of nsP1. Interacts with host TMEM45B; this interaction leads to viral replication inhibition. Interacts with mRNA-capping enzyme nsP1. Interacts (via C-terminus) with host G3BP1; this interaction inhibits the formation of host stress granules on viral mRNAs and the nsp3-G3BP1 complexes bind viral RNAs and probably orchestrate the assembly of viral replication complexes. Interacts (via C-terminus) with host G3BP2; this interaction inhibits the formation of host stress granules on viral mRNAs and the nsp3-G3BP2 complexes bind viral RNAs and probably orchestrate the assembly of viral replication complexes. Interacts (via C-terminus) with host NAP1L1. Interacts (via C-terminus) with host NAP1L4. Interacts (via C-terminus) with host DHX9; this interaction allows the recruitment of DHX9 to the plasma membrane, where it associates with viral replication complexes and may play a role in the translation-to-replication switch. Interacts (via C-terminus) with host FHL1 (via LIM domain 1); this interaction is required for viral RNA replication. Interacts (via C-terminus) with host CD2AP; this interaction plays a role in initiation of viral replication. Interacts (via C-terminus) with host SH3KBP1; this interaction plays a role in initiation of viral replication. In terms of assembly, interacts with mRNA-capping enzyme nsP1. Interacts with protease nsP2. interacts with itself. Interacts with host TMEM45B; this interaction leads to viral replication inhibition. As to quaternary structure, interacts with RNA-directed RNA polymerase nsP4. Interacts with mRNA-capping enzyme nsP1. Interacts with KPNA1/karyopherin-alpha1; this interaction probably allows the active transport of protease nsP2 into the host nucleus. Requires Mg(2+) as cofactor. Mn(2+) is required as a cofactor. Post-translationally, specific enzymatic cleavages in vivo yield mature proteins. The processing of the polyprotein is temporally regulated. In early stages (1.7 hpi), P1234 is first cleaved in trans through its nsP2 protease activity, releasing P123' and nsP4, which associate to form the early replication complex. At the same time, P1234 is also cut at the nsP1/nsP2 site early in infection but with lower efficiency. After replication of the viral minus-strand RNAs (4 hpi), the polyproteins are cut at the nsP1/nsP2 and nsP2/nsP3 sites very efficiently, preventing accumulation of P123' and P1234 and allowing the formation of the late replication complex. NsP3'/nsP4 site is not cleaved anymore and P34 is produced rather than nsP4. In terms of processing, specific enzymatic cleavages in vivo yield mature proteins. The processing of the polyprotein is temporally regulated. In early stages (1.7 hpi), P123 is cleaved at the nsP1/nsP2 site with low efficiency. After replication of the viral minus-strand RNAs (4 hpi), the polyproteins are cut at the nsP1/nsP2 and nsP2/nsP3 sites very efficiently, preventing accumulation of P123 and allowing the formation of the late replication complex. Specific enzymatic cleavages in vivo yield mature proteins. The processing of the polyprotein is temporally regulated. In early stages (1.7 hpi), P123' is cleaved at the nsP1/nsP2 site with low efficiency. After replication of the viral minus-strand RNAs (4 hpi), the polyproteins are cut at the nsP1/nsP2 and nsP2/nsP3 sites very efficiently, preventing accumulation of P123' and allowing the formation of the late replication complex. Post-translationally, palmitoylated by host palmitoyltransferases ZDHHC2 and ZDHHC19. Palmitoylation is increased by the interacton with host STING1. In terms of processing, phosphorylated by host on serines and threonines. Ubiquitinated; targets the protein for rapid degradation via the ubiquitin system. Nsp4 is present in extremely low quantities due to low frequency of translation through the amber stop-codon and the degradation by the ubiquitin pathway.

It is found in the host cytoplasmic vesicle membrane. The protein resides in the host cell membrane. The protein localises to the host cell projection. Its subcellular location is the host filopodium. It localises to the host nucleus. It is found in the host cytoplasm. The catalysed reaction is GTP + S-adenosyl-L-methionine = N(7)-methyl-GTP + S-adenosyl-L-homocysteine. It carries out the reaction N(7)-methyl-GTP + L-histidyl-[protein] = N(tele)-(N(7)-methylguanosine 5'-phospho)-L-histidyl-[protein] + diphosphate. It catalyses the reaction N(tele)-(N(7)-methylguanosine 5'-phospho)-L-histidyl-[protein] + a 5'-end diphospho-(purine-ribonucleoside) in mRNA + H(+) = a 5'-end (N(7)-methyl 5'-triphosphoguanosine)-(purine-ribonucleoside) in mRNA + L-histidyl-[protein]. The enzyme catalyses a 5'-end triphospho-ribonucleoside in mRNA + H2O = a 5'-end diphospho-ribonucleoside in mRNA + phosphate + H(+). The catalysed reaction is a ribonucleoside 5'-triphosphate + H2O = a ribonucleoside 5'-diphosphate + phosphate + H(+). It carries out the reaction ATP + H2O = ADP + phosphate + H(+). It catalyses the reaction RNA(n) + a ribonucleoside 5'-triphosphate = RNA(n+1) + diphosphate. The enzyme catalyses 4-O-(ADP-D-ribosyl)-L-aspartyl-[protein] + H2O = L-aspartyl-[protein] + ADP-D-ribose + H(+). The catalysed reaction is 5-O-(ADP-D-ribosyl)-L-glutamyl-[protein] + H2O = L-glutamyl-[protein] + ADP-D-ribose + H(+). It carries out the reaction RNA(n) + ATP = RNA(n)-3'-adenine ribonucleotide + diphosphate. It catalyses the reaction ADP-alpha-D-ribose 1''-phosphate + H2O = ADP-D-ribose + phosphate. Its function is as follows. Inactive precursor of the viral replicase, which is activated by cleavages carried out by the viral protease nsP2. In terms of biological role, the early replication complex formed by the polyprotein P123 and nsP4 synthesizes minus-strand RNAs. As soon P123 is cleaved into mature proteins, the plus-strand RNAs synthesis begins. The early replication complex formed by the polyprotein P123' and nsP4 synthesizes minus-strand RNAs. Polyprotein P123' is a short-lived polyprotein that accumulates during early stage of infection. As soon P123' is cleaved into mature proteins, the plus-strand RNAs synthesis begins. Functionally, cytoplasmic capping enzyme that catalyzes two virus-specific reactions: methyltransferase and guanylyltransferase. mRNA-capping is necessary since all viral RNAs are synthesized in the cytoplasm, and host capping enzymes are restricted to the nucleus. The enzymatic reaction involves a covalent link between 7-methyl-GMP and nsP1, whereas eukaryotic capping enzymes form a covalent complex only with GMP. nsP1 capping consists in the following reactions: GTP is first methylated into 7-methyl-GMP and then is covalently linked to nsP1 to form the m7GMp-nsP1 complex from which 7-methyl-GMP complex is transferred to the mRNA to create the cap structure. NsP1 is also needed for the initiation of the minus-strand RNAs synthesis. At the initiation of virus replication, mediates the assembly of the viral replication complex made of the non-structural proteins, the association of this complex with the inner face of the plasma membrane and the formation of membranous spherules that serve as replication complex factories. Forms the neck of these spherules with a central channel for mediating communication and the passage of RNA, nucleotides, and small proteins between the viral replication complex and the host cytoplasm. Palmitoylated nsP1 is remodeling host cell cytoskeleton, and induces filopodium-like structure formation at the surface of the host cell. Its function is as follows. Multifunctional protein whose N-terminus is part of the RNA polymerase complex and displays NTPase, RNA triphosphatase and helicase activities. NTPase and RNA triphosphatase are involved in viral RNA capping and helicase keeps a check on the dsRNA replication intermediates. The C-terminus harbors a protease that specifically cleaves the polyproteins and releases the mature proteins. Required for the shutoff of minus-strand RNAs synthesis. Specifically inhibits the host IFN response by promoting the nuclear export of host STAT1. Also inhibits host transcription by inducing the rapid proteasome-dependent degradation of POLR2A, a catalytic subunit of the RNAPII complex. The resulting inhibition of cellular protein synthesis serves to ensure maximal viral gene expression and to evade host immune response. In terms of biological role, seems to be essential for minus-strand RNAs and subgenomic 26S mRNAs synthesis. Displays mono-ADP-ribosylhydrolase activity. ADP-ribosylation is a post-translational modification that controls various processes of the host cell and the virus probably needs to revert it for optimal viral replication. Binds proteins of FXR family and sequesters them into the viral RNA replication complexes thereby inhibiting the formation of host stress granules on viral mRNAs. The nsp3'-FXR complexes bind viral RNAs and probably orchestrate the assembly of viral replication complexes, thanks to the ability of FXR family members to self-assemble and bind DNA. Seems to be essential for minus-strand RNAs and subgenomic 26S mRNAs synthesis. Displays mono-ADP-ribosylhydrolase activity. ADP-ribosylation is a post-translational modification that controls various processes of the host cell and the virus probably needs to revert it for optimal viral replication. Binds proteins of G3BP family and sequesters them into the viral RNA replication complexes thereby inhibiting the formation of host stress granules on viral mRNAs. The nsp3-G3BP complexes bind viral RNAs and probably orchestrate the assembly of viral replication complexes, thanks to the ability of G3BP family members to self-assemble and bind DNA. Functionally, RNA dependent RNA polymerase. Replicates genomic and antigenomic RNA by recognizing replications specific signals. The early replication complex formed by the polyprotein P123 and nsP4 synthesizes minus-strand RNAs. The late replication complex composed of fully processed nsP1-nsP4 is responsible for the production of genomic and subgenomic plus-strand RNAs. This is Polyprotein P1234 from Aedes aegypti (Yellowfever mosquito).